The sequence spans 73 residues: RNA-binding protein Hfq (73 aa).

The 61-residue stretch at 8–68 folds into the Sm domain; it reads DQFLNQIRKE…ISTFAPQKNV (61 aa).

Belongs to the Hfq family. Homohexamer.

Its function is as follows. RNA chaperone that binds small regulatory RNA (sRNAs) and mRNAs to facilitate mRNA translational regulation in response to envelope stress, environmental stress and changes in metabolite concentrations. Also binds with high specificity to tRNAs. The sequence is that of RNA-binding protein Hfq from Bacillus licheniformis (strain ATCC 14580 / DSM 13 / JCM 2505 / CCUG 7422 / NBRC 12200 / NCIMB 9375 / NCTC 10341 / NRRL NRS-1264 / Gibson 46).